Here is a 139-residue protein sequence, read N- to C-terminus: Protein cornichon homolog 4 (139 aa).

3 consecutive transmembrane segments (helical) span residues 5 to 25 (VFVFSLLDCCALIFLSVYFII), 57 to 77 (IVTVLLLMSLHWFIFLLNLPV), and 118 to 138 (LGFHLLCFFMYLYSMILALIN).

The protein belongs to the cornichon family. Interacts with Sec23/24 complex components SEC24B and SEC24D. Interacts with CCR5. Interacts with ADRB2 in the early secretory pathway.

The protein localises to the membrane. Its subcellular location is the endoplasmic reticulum. It is found in the endoplasmic reticulum-Golgi intermediate compartment. Involved in G protein-coupled receptors (GPCRs) trafficking from the endoplasmic reticulum to the cell surface; it promotes the exit of GPCRs from the early secretory pathway, likely through interaction with the COPII machinery. This is Protein cornichon homolog 4 (CNIH4) from Homo sapiens (Human).